The following is a 1584-amino-acid chain: Kinesin-like protein unc-104 (1584 aa).

The region spanning 3 to 347 is the Kinesin motor domain; the sequence is SVKVAVRVRP…LRYADRAKQI (345 aa). 93–100 serves as a coordination point for ATP; sequence GQTGSGKS. The interval 183-335 is microtubule-binding; that stretch reads VCSYHDICNL…PADINFDETL (153 aa). Coiled coils occupy residues 425–445, 598–652, and 777–797; these read EQKL…LRDM, IDLK…SYIS, and SIEK…TDAE. The tract at residues 1366-1416 is disordered; the sequence is IPMNKDPPTGNKAQELSDESGSNSITSPVSDKSLIKSSRSSDLLCRQKSKS. Residues 1376–1394 show a composition bias toward polar residues; it reads NKAQELSDESGSNSITSPV. Low complexity predominate over residues 1395 to 1409; that stretch reads SDKSLIKSSRSSDLL. The 99-residue stretch at 1460–1558 folds into the PH domain; the sequence is VVSKKGYMNF…WLYAINPLMA (99 aa).

The protein belongs to the TRAFAC class myosin-kinesin ATPase superfamily. Kinesin family. Unc-104 subfamily. As to quaternary structure, interacts with casy-1. Expressed in nerve ring, amphid commissure and ventral nerve cord (at protein level).

The protein resides in the cytoplasm. It is found in the cytoskeleton. The protein localises to the cell projection. Its subcellular location is the axon. Motor protein involved in microtubule-associated anterograde transport. Regulates the transport of synaptic vesicle precursors in the axon of DA motor neurons. Regulates the polarized sorting of axonal proteins. Essential for the transport of synaptic components during the synaptic remodeling of the DD motor neuron, probably downstream of cdk-5 and/or pct-1/cyy-1 complex. Required for the anterograde transport of neuropeptide-containing dense core vesicles along axons. Involved in necrotic cell death. This chain is Kinesin-like protein unc-104 (unc-104), found in Caenorhabditis elegans.